A 344-amino-acid chain; its full sequence is Anthranilate phosphoribosyltransferase (344 aa).

Residues Gly-85, 88 to 89, Thr-93, 95 to 98, 113 to 121, and Ser-125 contribute to the 5-phospho-alpha-D-ribose 1-diphosphate site; these read GD, NIST, and KHGNRSVSS. An anthranilate-binding site is contributed by Gly-85. Residue Ser-97 coordinates Mg(2+). Anthranilate is bound at residue Asn-116. Residue Arg-171 coordinates anthranilate. Residues Asp-229 and Glu-230 each contribute to the Mg(2+) site.

This sequence belongs to the anthranilate phosphoribosyltransferase family. Homodimer. It depends on Mg(2+) as a cofactor.

The enzyme catalyses N-(5-phospho-beta-D-ribosyl)anthranilate + diphosphate = 5-phospho-alpha-D-ribose 1-diphosphate + anthranilate. The protein operates within amino-acid biosynthesis; L-tryptophan biosynthesis; L-tryptophan from chorismate: step 2/5. Its function is as follows. Catalyzes the transfer of the phosphoribosyl group of 5-phosphorylribose-1-pyrophosphate (PRPP) to anthranilate to yield N-(5'-phosphoribosyl)-anthranilate (PRA). This chain is Anthranilate phosphoribosyltransferase, found in Shewanella amazonensis (strain ATCC BAA-1098 / SB2B).